The sequence spans 549 residues: MNTFPLFFKLEDRKVLIVGGGDVALRKADLLSRAGACITVLAPSINHEIQALLSSSKHELIYEHYNKTYMTNSRVIIAATDDERLNHQIHADATALNIPVNVVDTPHLCDFIFPAIVDRNPIVIGISSNGKAPVLARLLRARLETLIPQGYGKLAKLAGEFRGDVKAKIPTLTGRRQFWERAFEGKVSQLMFAGNENEALAQLQADLDNTAASITAKDATDDNGLSTASTSAPAIANEFTAARNTMGEVYIVGAGPGDPELLTFKALRLMQQADIVYYDALVSPQVLDLCRRDADKVFVGKKRRNHAVAQLGINELLVNSAKEGRRVVRLKGGDPFIFGRGGEEIESLRAHNIPYQVVPGITAANAAASYAGIPLTHRDHSQSVRFVTGFLKAGAPNNNFKNFLDTDETVVFYMGLHSLPRLTEGLIDAGRSAETPIAIVSNASMPNQQVLTGTLASIVELQEKNQLPTPALLIMGDVVSLHHDLAWYNLHNQQHNQNTSETDNNWLRGGTATTPKSNAQFNAHQQAHALSMITNLATEDGDLEQLIIG.

The precorrin-2 dehydrogenase /sirohydrochlorin ferrochelatase stretch occupies residues 1–203 (MNTFPLFFKL…GNENEALAQL (203 aa)). NAD(+)-binding positions include 22 to 23 (DV) and 43 to 44 (PS). Phosphoserine is present on Ser-128. The interval 247-549 (GEVYIVGAGP…DGDLEQLIIG (303 aa)) is uroporphyrinogen-III C-methyltransferase. An S-adenosyl-L-methionine-binding site is contributed by Pro-256. Asp-279 functions as the Proton acceptor in the catalytic mechanism. Residue Lys-301 is the Proton donor of the active site. Residues 332 to 334 (GGD), Ile-337, 362 to 363 (TA), Met-414, and Ala-443 each bind S-adenosyl-L-methionine.

In the N-terminal section; belongs to the precorrin-2 dehydrogenase / sirohydrochlorin ferrochelatase family. This sequence in the C-terminal section; belongs to the precorrin methyltransferase family.

The catalysed reaction is uroporphyrinogen III + 2 S-adenosyl-L-methionine = precorrin-2 + 2 S-adenosyl-L-homocysteine + H(+). The enzyme catalyses precorrin-2 + NAD(+) = sirohydrochlorin + NADH + 2 H(+). It carries out the reaction siroheme + 2 H(+) = sirohydrochlorin + Fe(2+). Its pathway is cofactor biosynthesis; adenosylcobalamin biosynthesis; precorrin-2 from uroporphyrinogen III: step 1/1. The protein operates within cofactor biosynthesis; adenosylcobalamin biosynthesis; sirohydrochlorin from precorrin-2: step 1/1. It functions in the pathway porphyrin-containing compound metabolism; siroheme biosynthesis; precorrin-2 from uroporphyrinogen III: step 1/1. It participates in porphyrin-containing compound metabolism; siroheme biosynthesis; siroheme from sirohydrochlorin: step 1/1. Its pathway is porphyrin-containing compound metabolism; siroheme biosynthesis; sirohydrochlorin from precorrin-2: step 1/1. Functionally, multifunctional enzyme that catalyzes the SAM-dependent methylations of uroporphyrinogen III at position C-2 and C-7 to form precorrin-2 via precorrin-1. Then it catalyzes the NAD-dependent ring dehydrogenation of precorrin-2 to yield sirohydrochlorin. Finally, it catalyzes the ferrochelation of sirohydrochlorin to yield siroheme. This is Siroheme synthase from Psychrobacter arcticus (strain DSM 17307 / VKM B-2377 / 273-4).